The sequence spans 98 residues: Citrate lyase acyl carrier protein (98 aa).

Ser-14 carries the post-translational modification O-(phosphoribosyl dephospho-coenzyme A)serine.

This sequence belongs to the CitD family. As to quaternary structure, oligomer with a subunit composition of (alpha,beta,gamma)6.

The protein localises to the cytoplasm. In terms of biological role, covalent carrier of the coenzyme of citrate lyase. In Escherichia coli O127:H6 (strain E2348/69 / EPEC), this protein is Citrate lyase acyl carrier protein.